The chain runs to 224 residues: NBPF family member NBPF6-like protein (224 aa).

The Olduvai domain maps to 159 to 224 (ENHHDRKDEE…ASVCDVQDQL (66 aa)). Positions 198-209 (YLTHSSHHDSHR) are enriched in basic and acidic residues. Residues 198–224 (YLTHSSHHDSHRPPSSIASVCDVQDQL) form a disordered region.

It belongs to the NBPF family.

The protein is NBPF family member NBPF6-like protein of Bos taurus (Bovine).